The chain runs to 363 residues: NADH-quinone oxidoreductase subunit H (363 aa).

10 helical membrane-spanning segments follow: residues 29 to 49, 62 to 82, 96 to 116, 127 to 147, 163 to 183, 202 to 222, 239 to 257, 264 to 286, 299 to 319, and 339 to 359; these read VLKI…YVVW, GPMY…KLLF, FIIA…VVPF, VGLL…ILAG, AAQV…VMIA, FFDW…VSGV, IVAG…LFFL, ILVS…QGWV, TGGW…YIWF, and FIPL…YGVI.

It belongs to the complex I subunit 1 family. As to quaternary structure, NDH-1 is composed of 14 different subunits. Subunits NuoA, H, J, K, L, M, N constitute the membrane sector of the complex.

It is found in the cell inner membrane. It carries out the reaction a quinone + NADH + 5 H(+)(in) = a quinol + NAD(+) + 4 H(+)(out). Its function is as follows. NDH-1 shuttles electrons from NADH, via FMN and iron-sulfur (Fe-S) centers, to quinones in the respiratory chain. The immediate electron acceptor for the enzyme in this species is believed to be ubiquinone. Couples the redox reaction to proton translocation (for every two electrons transferred, four hydrogen ions are translocated across the cytoplasmic membrane), and thus conserves the redox energy in a proton gradient. This subunit may bind ubiquinone. In Xanthomonas campestris pv. campestris (strain 8004), this protein is NADH-quinone oxidoreductase subunit H.